A 256-amino-acid chain; its full sequence is 5-keto-4-deoxy-D-glucarate aldolase (256 aa).

The active-site Proton acceptor is the His-50. Gln-151 contributes to the substrate binding site. Glu-153 is a Mg(2+) binding site. Residues Ser-178 and Asp-179 each coordinate substrate. Asp-179 is a binding site for Mg(2+).

The protein belongs to the HpcH/HpaI aldolase family. KDGluc aldolase subfamily. In terms of assembly, homohexamer; trimer of dimers. The cofactor is Mg(2+).

It carries out the reaction 5-dehydro-4-deoxy-D-glucarate = 2-hydroxy-3-oxopropanoate + pyruvate. It catalyses the reaction 2-dehydro-3-deoxy-D-glucarate = 2-hydroxy-3-oxopropanoate + pyruvate. The protein operates within carbohydrate acid metabolism; galactarate degradation; D-glycerate from galactarate: step 2/3. Catalyzes the reversible retro-aldol cleavage of both 5-keto-4-deoxy-D-glucarate and 2-keto-3-deoxy-D-glucarate to pyruvate and tartronic semialdehyde. The protein is 5-keto-4-deoxy-D-glucarate aldolase of Salmonella paratyphi A (strain ATCC 9150 / SARB42).